We begin with the raw amino-acid sequence, 98 residues long: Large ribosomal subunit protein uL23 (98 aa).

This sequence belongs to the universal ribosomal protein uL23 family. In terms of assembly, part of the 50S ribosomal subunit. Contacts protein L29, and trigger factor when it is bound to the ribosome.

Functionally, one of the early assembly proteins it binds 23S rRNA. One of the proteins that surrounds the polypeptide exit tunnel on the outside of the ribosome. Forms the main docking site for trigger factor binding to the ribosome. The sequence is that of Large ribosomal subunit protein uL23 from Rickettsia rickettsii (strain Iowa).